The primary structure comprises 1578 residues: MSLEQQDETVVEEETKTSFETNNSTANNTNNNTDNTYKEEILKSTESITRNDDKVDPTSATALEKDIINNGEYSGSSSSSGNNNINGSNNIKNIVIEKVEQLERVVVNNNNGDENNKDIHDSSNNTEDIDISKSHIIKYDKDEMSTISTIHYSDDESSKEKQDNINSNNNNNKNKNEQIINSENILDTPMTEASDQTTPSDTPPTLTNNTSSTTTTTTTNNTTTAATTTTNSRRKRNSLSTPSSEMDPVLDSTSENNTTRKTRGSRNSKKEPEELLLTPEQAKELSNKSKKWIYVPIIEAEAKKEEVLPAKRDRKQVFNENIFSSSRKSTTKGGEKKNDTASTTNTPIITAQQNTTPLSPTQTTTTTTTPTTTTAQQNTPAQTESKPPTTISINIKGSKSPKTTGGKQQKPTPPSPVVISQPVVPSTPVVATTKKTNSRSKRSTANNNSETTQTPEVVISAPTTTTAAITTPINITPSSDSATIQQLQQSISMLEDKIRLISSNNKVATEILNNTITTTTTTAATSAIKDEEIIENTELQTTFTKSSTLAPPSSERKYSNLYSDDEDDTEMVDVSVSIPIPIPIPTPTQTTTKKTTLSKKRKSNTSTIIPTTTIQQEQGQEQGQQQPPQQQQPPQQQQPPQQQQPPQQQPPQQSTSPSKTQQENTSSTTTTTTTTTTTTNTEDTTTVIDKKPKKKPRHSAPLIPQIKPRLPLNGGSSERAQRSSRGRMGKAMRDVVLTPVFKRCLDLLEELFEHQHSPPFLVAVDPYALGILDYFDVIKHPMDLGTIKASLIGGGYDTIDKFAEDCRLVFSNAKTYNPSTNPVHIMAQSLEDVFEKGFPKVLIEPPSPPPKNVDQEKIEKLSNDLKNVTKELEKFKKDDSNSINNNNNNNNNYNNNNNNNNNNSSSSSSRSSSRKSHSSGSSSSHRSGSSRSSRGSSSSSSSSSSSSSSSSSSSSSSSSNNKKYPKVTTEEKTKLGAEITQLPVDLLPSILQIIHNTNSLPEQKPGSEVVIDLMKFDDDILRRLSKFVEQYKNGEIPQHALPLSAPSSTHSSHSSSHDSSSNIREIEKLQKQLDRLGKGQQNSSSSSSSSSHSKRISKPISKARGRKVISTSSSNLNNSSNNINNNNNNINNYNNNNNYNNNNNNNLNNNNNNNINSNLNNNLNNNNNKDDIVIDGFKKENFSSIPEKDVETDISESSDSESDSESGSSDSSSSYSDSDFSDSDNDRRRNYNNSYNNNNNNNNNNNSSNNFNNQNNSYNNSNNNNNNNSSNNNNNNNNNNSNNNNSNNNNNNVNNNNNNHNNNNHNNNINNNNNNINNNTTQPSPSQQSTSLTNEPIKPPTILQTVKKPALPVTGSVASWSFDPTNNKESSSSSSTSSTSSTSNTTLTPIIQQSSLTHASSPISSSTFVSFSSSSSTPPTNNLSPPSPGLPNSPSINSPSSPSANNNNTDSAWNHFKAKNITLKQKEKERVLQEEVLRKEREEKEEELKKEEEKKRIEMEEIKRLAKEKEEREAEETRKQIESERAAAREAREKEKLNNSKGNMSFQYQMDVMASFEDNIDSSGSLLNLQLKPIEDPL.

The segment covering 1 to 12 (MSLEQQDETVVE) has biased composition (acidic residues). 4 disordered regions span residues 1 to 39 (MSLEQQDETVVEEETKTSFETNNSTANNTNNNTDNTYKE), 108 to 127 (NNNNGDENNKDIHDSSNNTE), 151 to 285 (HYSD…AKEL), and 319 to 454 (NENI…TTQT). The span at 18–35 (SFETNNSTANNTNNNTDN) shows a compositional bias: low complexity. The span at 152–163 (YSDDESSKEKQD) shows a compositional bias: basic and acidic residues. 2 stretches are compositionally biased toward low complexity: residues 164-185 (NINSNNNNNKNKNEQIINSENI) and 197-231 (TTPSDTPPTLTNNTSSTTTTTTTNNTTTAATTTTN). Composition is skewed to polar residues over residues 319–332 (NENIFSSSRKSTTK) and 340–351 (TASTTNTPIITA). The span at 352-383 (QQNTTPLSPTQTTTTTTTPTTTTAQQNTPAQT) shows a compositional bias: low complexity. The segment covering 384 to 395 (ESKPPTTISINI) has biased composition (polar residues). Composition is skewed to low complexity over residues 396 to 407 (KGSKSPKTTGGK) and 417 to 433 (VVISQPVVPSTPVVATT). Polar residues predominate over residues 443–454 (STANNNSETTQT). Residues 479–506 (SDSATIQQLQQSISMLEDKIRLISSNNK) adopt a coiled-coil conformation. Disordered stretches follow at residues 543 to 565 (FTKSSTLAPPSSERKYSNLYSDD) and 580 to 730 (IPIP…RMGK). 2 stretches are compositionally biased toward low complexity: residues 604 to 653 (NTST…PPQQ) and 660 to 686 (TQQENTSSTTTTTTTTTTTTNTEDTTT). In terms of domain architecture, Bromo spans 735 to 841 (VVLTPVFKRC…DVFEKGFPKV (107 aa)). A coiled-coil region spans residues 851 to 903 (KNVDQEKIEKLSNDLKNVTKELEKFKKDDSNSINNNNNNNNNYNNNNNNNNNN). Disordered regions lie at residues 874–969 (KFKK…KVTT), 1039–1167 (HALP…NNNN), 1184–1452 (SIPE…TDSA), and 1480–1544 (EREE…KGNM). Composition is skewed to low complexity over residues 881–911 (NSINNNNNNNNNYNNNNNNNNNNSSSSSSRS), 918–961 (SSGS…SSNN), and 1047–1061 (SSTHSSHSSSHDSSS). An NET domain is found at 957-1039 (SSSNNKKYPK…QYKNGEIPQH (83 aa)). Positions 1064–1077 (REIEKLQKQLDRLG) are enriched in basic and acidic residues. A compositionally biased stretch (basic residues) spans 1092–1107 (HSKRISKPISKARGRK). Positions 1112–1167 (SSSNLNNSSNNINNNNNNINNYNNNNNYNNNNNNNLNNNNNNNINSNLNNNLNNNN) are enriched in low complexity. Positions 1113–1150 (SSNLNNSSNNINNNNNNINNYNNNNNYNNNNNNNLNNN) form a coiled coil. Over residues 1192-1204 (TDISESSDSESDS) the composition is skewed to acidic residues. Composition is skewed to low complexity over residues 1205–1218 (ESGSSDSSSSYSDS) and 1231–1334 (YNNS…SLTN). The stretch at 1280 to 1308 (NSNNNNSNNNNNNVNNNNNNHNNNNHNNN) forms a coiled coil. Over residues 1356–1369 (SVASWSFDPTNNKE) the composition is skewed to polar residues. Positions 1370-1386 (SSSSSSTSSTSSTSNTT) are enriched in low complexity. Polar residues predominate over residues 1387–1399 (LTPIIQQSSLTHA). 2 stretches are compositionally biased toward low complexity: residues 1400–1424 (SSPISSSTFVSFSSSSSTPPTNNLS) and 1432–1451 (NSPSINSPSSPSANNNNTDS). Positions 1462–1544 (TLKQKEKERV…EKLNNSKGNM (83 aa)) form a coiled coil. Positions 1480-1538 (EREEKEEELKKEEEKKRIEMEEIKRLAKEKEEREAEETRKQIESERAAAREAREKEKLN) are enriched in basic and acidic residues.

This is Bromodomain-containing protein DDB_G0270170 from Dictyostelium discoideum (Social amoeba).